A 112-amino-acid chain; its full sequence is DNA-binding protein TK1278 (112 aa).

This sequence belongs to the PDCD5 family.

The protein is DNA-binding protein TK1278 of Thermococcus kodakarensis (strain ATCC BAA-918 / JCM 12380 / KOD1) (Pyrococcus kodakaraensis (strain KOD1)).